Reading from the N-terminus, the 185-residue chain is Large ribosomal subunit protein uL5 (185 aa).

This sequence belongs to the universal ribosomal protein uL5 family. Part of the 50S ribosomal subunit; part of the 5S rRNA/L5/L18/L25 subcomplex. Contacts the 5S rRNA and the P site tRNA. Forms a bridge to the 30S subunit in the 70S ribosome.

Functionally, this is one of the proteins that bind and probably mediate the attachment of the 5S RNA into the large ribosomal subunit, where it forms part of the central protuberance. In the 70S ribosome it contacts protein S13 of the 30S subunit (bridge B1b), connecting the 2 subunits; this bridge is implicated in subunit movement. Contacts the P site tRNA; the 5S rRNA and some of its associated proteins might help stabilize positioning of ribosome-bound tRNAs. The protein is Large ribosomal subunit protein uL5 of Rhizobium johnstonii (strain DSM 114642 / LMG 32736 / 3841) (Rhizobium leguminosarum bv. viciae).